The following is a 162-amino-acid chain: MLRQLRLTMDISGWIFLPWRRSMSNMKESPPPPPLASTFDDVIVDYEDPDYLPLPEYPLRPNEPLQTRKQRLLYQSRKRGMLENDLLLSTFAAKHLQSFSAEQTAQYDQLINGVSNDWDIYYWATDVKPTPKEYDTEIMGLLKEHVKNAERVSRLRQPDLNT.

A mitochondrion-targeting transit peptide spans 1 to 23 (MLRQLRLTMDISGWIFLPWRRSM).

Belongs to the SDHAF2 family. Interacts with the flavoprotein subunit within the SDH catalytic dimer.

The protein localises to the mitochondrion matrix. Functionally, plays an essential role in the assembly of succinate dehydrogenase (SDH), an enzyme complex (also referred to as respiratory complex II) that is a component of both the tricarboxylic acid (TCA) cycle and the mitochondrial electron transport chain, and which couples the oxidation of succinate to fumarate with the reduction of ubiquinone (coenzyme Q) to ubiquinol. Required for flavinylation (covalent attachment of FAD) of the flavoprotein subunit of the SDH catalytic dimer. This Drosophila erecta (Fruit fly) protein is Succinate dehydrogenase assembly factor 2-A, mitochondrial.